A 117-amino-acid polypeptide reads, in one-letter code: UPF0295 protein GTNG_0491 (117 aa).

Helical transmembrane passes span 12 to 32 and 42 to 62; these read IRTFALSLIFVGVIVMYLGLF and LFMVLGLLFLVASGIVYFWIG.

This sequence belongs to the UPF0295 family.

The protein resides in the cell membrane. The sequence is that of UPF0295 protein GTNG_0491 from Geobacillus thermodenitrificans (strain NG80-2).